A 776-amino-acid polypeptide reads, in one-letter code: MASLIYRQLLGNSYAVDLSDETQEIGASRNQNVTVNPGPFAQTNYAPVSWGPGEVRDSTTVEPLLDGPYQPTTFNPPVDYWMLLAPTDRGVVVEGTNNTNRWLAIILVEPDVPTEERTYTLFGQQAQITVANDSQLKWKFIVVSKQTLDGAYAQYGPLLSATKLYAVMKHSGRIYTYSGETPNATTAYYSTTNYDTVNMKAYCHFYIIPRTQESKCTEYINTGLPPIQNTRNVIPVSITSRDIQYTRAQVNEDILISKASLWKEMQYNRDIIIRFQIANSIVKSGGLGYKWSEISFKPANYQYSYIRDDEEVTSATTCSVNGVNEFSYSGGSLPTDFAVSKYEVIKENSFVYVDYWDDSQAFRNMVYVRSLAANLNSVMCTGGDFSFALPVGHYPVMTGGAVTLHSAGVTLSTQFTDFVSLNSLRFRFSLSVEEPPFSIIRTRVSGLYGLPATKPNNSQEYYEIAGRFSLISLVPSNDDYQTPIMNSVTVRQDLERQLSELRDEFNSLSQQIAMSQLIDLALLPLDMFSMFSGIKSTIDAAKSMVTNVMKKFKKSSLANSVSTLTNSLSDAASSVSRSSSIRSIGSTASAWTDVSITASDVSTATNSIATQTSTISKRLRLKEMATQTDGMNFDDISAEMLKTKIDKSTQITADTLPEMITEASEKFIPNRTYRIINNDEVFETSIDGKYFAYRVDTFEEIPFDVQKFADLVTDSPVISAIIDFKTLKKLNDNYGITKEQAFNLLRSDPKVLREFINQNNPIIKNRIENLIMQCRL.

Residues 65–224 (LDGPYQPTTF…KCTEYINTGL (160 aa)) form a spike head region. Disulfide bonds link cysteine 203–cysteine 216 and cysteine 318–cysteine 380. The spike body and stalk (antigen domain) stretch occupies residues 248–479 (AQVNEDILIS…LISLVPSNDD (232 aa)). Positions 389–409 (LPVGHYPVMTGGAVTLHSAGV) are hydrophobic; possible role in virus entry into host cell. Positions 448 to 450 (YGL) match the YGL motif; interaction with ITGA4 motif. Residues 484 to 511 (IMNSVTVRQDLERQLSELRDEFNSLSQQ) adopt a coiled-coil conformation. A spike foot region spans residues 510 to 776 (QQIAMSQLID…IENLIMQCRL (267 aa)). Positions 644 to 646 (KID) match the KID motif; interaction with HSPA8 motif.

This sequence belongs to the rotavirus VP4 family. As to quaternary structure, homotrimer. VP4 adopts a dimeric appearance above the capsid surface, while forming a trimeric base anchored inside the capsid layer. Only hints of the third molecule are observed above the capsid surface. It probably performs a series of molecular rearrangements during viral entry. Prior to trypsin cleavage, it is flexible. The priming trypsin cleavage triggers its rearrangement into rigid spikes with approximate two-fold symmetry of their protruding parts. After an unknown second triggering event, cleaved VP4 may undergo another rearrangement, in which two VP5* subunits fold back on themselves and join a third subunit to form a tightly associated trimer, shaped like a folded umbrella. Interacts with VP6. Interacts with VP7. Homotrimer. The trimer is coiled-coil stabilized by its C-terminus, however, its N-terminus, known as antigen domain or 'body', seems to be flexible allowing it to self-associate either as a dimer or a trimer. In terms of processing, proteolytic cleavage by trypsin results in activation of VP4 functions and greatly increases infectivity. The penetration into the host cell is dependent on trypsin treatment of VP4. It produces two peptides, VP5* and VP8* that remain associated with the virion. Cleavage of VP4 by trypsin probably occurs in vivo in the lumen of the intestine prior to infection of enterocytes. Trypsin seems to be incorporated into the three-layered viral particles but remains inactive as long as the viral outer capsid is intact and would only be activated upon the solubilization of the latter.

The protein resides in the virion. It localises to the host rough endoplasmic reticulum. The protein localises to the host cell membrane. It is found in the host cytoplasm. Its subcellular location is the host cytoskeleton. The protein resides in the host endoplasmic reticulum-Golgi intermediate compartment. Spike-forming protein that mediates virion attachment to the host epithelial cell receptors and plays a major role in cell penetration, determination of host range restriction and virulence. Rotavirus attachment and entry into the host cell probably involves multiple sequential contacts between the outer capsid proteins VP4 and VP7, and the cell receptors. It is subsequently lost, together with VP7, following virus entry into the host cell. Following entry into the host cell, low intracellular or intravesicular Ca(2+) concentration probably causes the calcium-stabilized VP7 trimers to dissociate from the virion. This step is probably necessary for the membrane-disrupting entry step and the release of VP4, which is locked onto the virion by VP7. During the virus exit from the host cell, VP4 seems to be required to target the newly formed virions to the host cell lipid rafts. Functionally, forms the spike 'foot' and 'body' and acts as a membrane permeabilization protein that mediates release of viral particles from endosomal compartments into the cytoplasm. During entry, the part of VP5* that protrudes from the virus folds back on itself and reorganizes from a local dimer to a trimer. This reorganization may be linked to membrane penetration by exposing VP5* hydrophobic region. In integrin-dependent strains, VP5* targets the integrin heterodimer ITGA2/ITGB1 for cell attachment. Its function is as follows. Forms the head of the spikes and mediates the recognition of specific host cell surface glycans. It is the viral hemagglutinin and an important target of neutralizing antibodies. In sialic acid-dependent strains, VP8* binds to host cell sialic acid, most probably a ganglioside, providing the initial contact. In some other strains, VP8* mediates the attachment to histo-blood group antigens (HBGAs) for viral entry. This chain is Outer capsid protein VP4, found in Rotavirus A (isolate RVA/Equine/United Kingdom/L338/1988/G13P12[18]) (RV-A).